Here is a 463-residue protein sequence, read N- to C-terminus: Cysteine--tRNA ligase (463 aa).

A Zn(2+)-binding site is contributed by Cys33. The 'HIGH' region signature appears at 35-45 (PTVYDFAHIGN). The Zn(2+) site is built by Cys221, His246, and Glu250. The 'KMSKS' region signature appears at 279–283 (KMSKS). Lys282 is a binding site for ATP.

The protein belongs to the class-I aminoacyl-tRNA synthetase family. Monomer. Requires Zn(2+) as cofactor.

It localises to the cytoplasm. The catalysed reaction is tRNA(Cys) + L-cysteine + ATP = L-cysteinyl-tRNA(Cys) + AMP + diphosphate. The polypeptide is Cysteine--tRNA ligase (Rhizobium johnstonii (strain DSM 114642 / LMG 32736 / 3841) (Rhizobium leguminosarum bv. viciae)).